The following is a 153-amino-acid chain: Myoglobin (153 aa).

The Globin domain maps to 2-147; the sequence is GLNDQEWQQV…FRNDMASKYK (146 aa). Position 65 (H65) interacts with nitrite. H65 provides a ligand contact to O2. A heme b-binding site is contributed by H93.

This sequence belongs to the globin family. As to quaternary structure, monomeric.

It is found in the cytoplasm. The protein localises to the sarcoplasm. The enzyme catalyses Fe(III)-heme b-[protein] + nitric oxide + H2O = Fe(II)-heme b-[protein] + nitrite + 2 H(+). The catalysed reaction is H2O2 + AH2 = A + 2 H2O. Its function is as follows. Monomeric heme protein which primary function is to store oxygen and facilitate its diffusion within muscle tissues. Reversibly binds oxygen through a pentacoordinated heme iron and enables its timely and efficient release as needed during periods of heightened demand. Depending on the oxidative conditions of tissues and cells, and in addition to its ability to bind oxygen, it also has a nitrite reductase activity whereby it regulates the production of bioactive nitric oxide. Under stress conditions, like hypoxia and anoxia, it also protects cells against reactive oxygen species thanks to its pseudoperoxidase activity. The polypeptide is Myoglobin (MB) (Aptenodytes forsteri (Emperor penguin)).